A 65-amino-acid polypeptide reads, in one-letter code: Large ribosomal subunit protein bL35 (65 aa).

The protein belongs to the bacterial ribosomal protein bL35 family.

This chain is Large ribosomal subunit protein bL35, found in Parasynechococcus marenigrum (strain WH8102).